Here is a 66-residue protein sequence, read N- to C-terminus: UPF0391 membrane protein AM1_5042 (66 aa).

Helical transmembrane passes span 4-24 (LTLT…SGIA) and 28-47 (AAIA…LVWP).

Belongs to the UPF0391 family.

It localises to the cell membrane. The chain is UPF0391 membrane protein AM1_5042 from Acaryochloris marina (strain MBIC 11017).